Consider the following 126-residue polypeptide: Probable prefoldin subunit 6 (126 aa).

It belongs to the prefoldin subunit beta family. As to quaternary structure, heterohexamer of two PFD-alpha type and four PFD-beta type subunits. In terms of tissue distribution, expressed in embryonic blastomeres and gonads.

The protein resides in the cytoplasm. Binds specifically to cytosolic chaperonin (c-CPN) and transfers target proteins to it. Binds to nascent polypeptide chain and promotes folding in an environment in which there are many competing pathways for nonnative proteins. Required for positioning of the mitotic spindle. This Caenorhabditis elegans protein is Probable prefoldin subunit 6 (pfd-6).